The primary structure comprises 173 residues: uncharacterized protein (173 aa).

This is an uncharacterized protein from Rhodospirillum rubrum.